The primary structure comprises 491 residues: MASEFRPPLHFVLFPFMAQGHMIPMVDIARLLAQRGVTITIVTTPQNAGRFKNVLSRAIQSGLPINLVQVKFPSQESGSPEGQENLDLLDSLGASLTFFKAFSLLEEPVEKLLKEIQPRPNCIIADMCLPYTNRIAKNLGIPKIIFHGMCCFNLLCTHIMHQNHEFLETIESDKEYFPIPNFPDRVEFTKSQLPMVLVAGDWKDFLDGMTEGDNTSYGVIVNTFEELEPAYVRDYKKVKAGKIWSIGPVSLCNKLGEDQAERGNKADIDQDECIKWLDSKEEGSVLYVCLGSICNLPLSQLKELGLGLEESQRPFIWVIRGWEKYNELLEWISESGYKERIKERGLLITGWSPQMLILTHPAVGGFLTHCGWNSTLEGITSGVPLLTWPLFGDQFCNEKLAVQILKAGVRAGVEESMRWGEEEKIGVLVDKEGVKKAVEELMGDSNDAKERRKRVKELGELAHKAVEEGGSSHSNITFLLQDIMQLEQPKK.

UDP-alpha-D-glucose contacts are provided by residues Ser-292, 352–354, 369–377, and 391–394; these read SPQ, HCGWNSTLE, and FGDQ.

It belongs to the UDP-glycosyltransferase family.

Involved in the O-glucosylation of trans-zeatin and dihydrozeatin. Also active in vitro on cis-zeatin, dihydrozeatin-9-N-Glc, and olomoucine. Can detoxify the explosive 2,4,6-trinitrotoluene in plant by forming O- or C-glucose conjugates. This is UDP-glycosyltransferase 73C1 (UGT73C1) from Arabidopsis thaliana (Mouse-ear cress).